The primary structure comprises 776 residues: Meiotic expression up-regulated protein 1/2 (776 aa).

Coiled coils occupy residues 87-122, 173-227, 265-307, 362-430, and 496-595; these read YVLK…AQEE, FSEL…DLKE, YKVE…NDEE, KMSQ…RNNS, and INNQ…NTEL.

The sequence is that of Meiotic expression up-regulated protein 1/2 (meu1) from Schizosaccharomyces pombe (strain 972 / ATCC 24843) (Fission yeast).